A 347-amino-acid chain; its full sequence is Dihydroorotase (347 aa).

Zn(2+) contacts are provided by His14 and His16. Residues 16–18 (HLR) and Asn42 each bind substrate. Zn(2+)-binding residues include Lys100, His137, and His175. Lys100 carries the N6-carboxylysine modification. His137 serves as a coordination point for substrate. Leu220 serves as a coordination point for substrate. A Zn(2+)-binding site is contributed by Asp248. Asp248 is an active-site residue. Substrate-binding residues include His252 and Ala264.

Belongs to the metallo-dependent hydrolases superfamily. DHOase family. Class II DHOase subfamily. As to quaternary structure, homodimer. The cofactor is Zn(2+).

The catalysed reaction is (S)-dihydroorotate + H2O = N-carbamoyl-L-aspartate + H(+). The protein operates within pyrimidine metabolism; UMP biosynthesis via de novo pathway; (S)-dihydroorotate from bicarbonate: step 3/3. Catalyzes the reversible cyclization of carbamoyl aspartate to dihydroorotate. The protein is Dihydroorotase of Jannaschia sp. (strain CCS1).